Reading from the N-terminus, the 64-residue chain is UPF0337 protein SAR0874 (64 aa).

Positions 1–40 (MADESKFEQAKGNVKETVGNVTDNKNLENEGKEDKASGKA) are disordered. Positions 25 to 40 (KNLENEGKEDKASGKA) are enriched in basic and acidic residues.

The protein belongs to the UPF0337 (CsbD) family.

This Staphylococcus aureus (strain MRSA252) protein is UPF0337 protein SAR0874.